We begin with the raw amino-acid sequence, 476 residues long: 3-isopropylmalate dehydratase large subunit (476 aa).

The [4Fe-4S] cluster site is built by Cys357, Cys417, and Cys420.

This sequence belongs to the aconitase/IPM isomerase family. LeuC type 1 subfamily. Heterodimer of LeuC and LeuD. [4Fe-4S] cluster is required as a cofactor.

It catalyses the reaction (2R,3S)-3-isopropylmalate = (2S)-2-isopropylmalate. Its pathway is amino-acid biosynthesis; L-leucine biosynthesis; L-leucine from 3-methyl-2-oxobutanoate: step 2/4. Catalyzes the isomerization between 2-isopropylmalate and 3-isopropylmalate, via the formation of 2-isopropylmaleate. The protein is 3-isopropylmalate dehydratase large subunit of Mycolicibacterium paratuberculosis (strain ATCC BAA-968 / K-10) (Mycobacterium paratuberculosis).